The following is a 413-amino-acid chain: D-nopaline dehydrogenase (413 aa).

It belongs to the lysopine/nopaline/octopine/opine/vitopine dehydrogenases family. In terms of assembly, homotetramer.

The enzyme catalyses D-nopaline + NADP(+) + H2O = L-arginine + 2-oxoglutarate + NADPH + H(+). This Agrobacterium tumefaciens (strain T37) protein is D-nopaline dehydrogenase (nos).